The sequence spans 117 residues: Alpha-endosulfine (117 aa).

The tract at residues Met-1–Phe-53 is disordered. A compositionally biased stretch (basic and acidic residues) spans Arg-10–Leu-37. Residue Ser-67 is modified to Phosphoserine; by GWL. The disordered stretch occupies residues Lys-76 to Gly-117.

This sequence belongs to the endosulfine family. In terms of processing, phosphorylation at Ser-67 by GWL during mitosis is essential for interaction with PPP2R2D (PR55-delta) and subsequent inactivation of PP2A.

The protein localises to the cytoplasm. Protein phosphatase inhibitor that specifically inhibits protein phosphatase 2A (PP2A) during mitosis. When phosphorylated at Ser-67 during mitosis, specifically interacts with PPP2R2D (PR55-delta) and inhibits its activity, leading to inactivation of PP2A, an essential condition to keep cyclin-B1-CDK1 activity high during M phase. In Gallus gallus (Chicken), this protein is Alpha-endosulfine (ENSA).